The sequence spans 423 residues: F-box/LRR-repeat protein 2 (423 aa).

The F-box domain maps to Gly9–Ile55. LRR repeat units lie at residues Gln61–Gly87, Cys88–Gly113, Cys114–Ser139, Cys140–Trp165, Cys166–Gly191, Cys192–Ser217, Cys218–Gly243, Cys244–Arg269, Cys270–Glu295, Cys296–His321, Cys322–Asn350, Cys351–Asp375, and Cys376–Ala401. The tract at residues Leu80–Gly90 is interaction with Calmodulin. Residue Lys201 forms a Glycyl lysine isopeptide (Lys-Gly) (interchain with G-Cter in ubiquitin) linkage. Position 404 is a phosphothreonine (Thr404). Cys420 carries S-geranylgeranyl cysteine lipidation. The CAAX motif signature appears at Cys420–Leu423.

Part of the SCF (SKP1-CUL1-F-box) E3 ubiquitin-protein ligase complex SCF(FBXL2) composed of CUL1, SKP1, RBX1 and FBXL2. Interacts with calmodulin; may antagonize substrate ubiquitination by SCF(FBXL2). May interact with PIK3R1. Interacts with PTPN13. In terms of processing, phosphorylated by GSK-beta (GSK3B), promoting recognition by FBXO3, leading to its ubiquitination by the SCF(FBXO3) complex. Ubiquitinated at Lys-201 by the SCF(FBXO3) complex in response to lipopolysaccharide (LPS), leading to its degradation by the proteasome.

Its subcellular location is the membrane. The protein operates within protein modification; protein ubiquitination. Functionally, calcium-activated substrate recognition component of the SCF (SKP1-cullin-F-box protein) E3 ubiquitin-protein ligase complex, SCF(FBXL2), which mediates the ubiquitination and subsequent proteasomal degradation of target proteins. Unlike many F-box proteins, FBXL2 does not seem to target phosphodegron within its substrates but rather calmodulin-binding motifs and is thereby antagonized by calmodulin. This is the case for the cyclins CCND2 and CCND3 which polyubiquitination and subsequent degradation are inhibited by calmodulin. Through CCND2 and CCND3 degradation induces cell-cycle arrest in G(0). SCF(FBXL2) also mediates PIK3R2 ubiquitination and proteasomal degradation thereby regulating phosphatidylinositol 3-kinase signaling and autophagy. PCYT1A monoubiquitination by SCF(FBXL2) and subsequent degradation regulates synthesis of phosphatidylcholine, which is utilized for formation of membranes and of pulmonary surfactant. The SCF(FBXL2) complex acts as a regulator of inflammation by mediating ubiquitination and degradation of TRAF proteins (TRAF1, TRAF2, TRAF3, TRAF4, TRAF5 and TRAF6). The SCF(FBXL2) complex acts as a negative regulator of the NLRP3 inflammasome by mediating ubiquitination and degradation of NLRP3. The polypeptide is F-box/LRR-repeat protein 2 (Bos taurus (Bovine)).